A 492-amino-acid chain; its full sequence is Ketol-acid reductoisomerase (NADP(+)) (492 aa).

One can recognise a KARI N-terminal Rossmann domain in the interval 15 to 208; that stretch reads AQLGKCRFMA…GGHRAGVLES (194 aa). Residues 45–48, R68, R76, S78, and 108–110 each bind NADP(+); these read CGAQ and DKQ. The active site involves H132. NADP(+) is bound at residue G158. KARI C-terminal knotted domains lie at 209–344 and 345–485; these read SFVA…TAAQ and FEGK…MTDM. Residues D217, E221, E389, and E393 each coordinate Mg(2+). Substrate is bound at residue S414.

This sequence belongs to the ketol-acid reductoisomerase family. Mg(2+) serves as cofactor.

It carries out the reaction (2R)-2,3-dihydroxy-3-methylbutanoate + NADP(+) = (2S)-2-acetolactate + NADPH + H(+). It catalyses the reaction (2R,3R)-2,3-dihydroxy-3-methylpentanoate + NADP(+) = (S)-2-ethyl-2-hydroxy-3-oxobutanoate + NADPH + H(+). It functions in the pathway amino-acid biosynthesis; L-isoleucine biosynthesis; L-isoleucine from 2-oxobutanoate: step 2/4. It participates in amino-acid biosynthesis; L-valine biosynthesis; L-valine from pyruvate: step 2/4. In terms of biological role, involved in the biosynthesis of branched-chain amino acids (BCAA). Catalyzes an alkyl-migration followed by a ketol-acid reduction of (S)-2-acetolactate (S2AL) to yield (R)-2,3-dihydroxy-isovalerate. In the isomerase reaction, S2AL is rearranged via a Mg-dependent methyl migration to produce 3-hydroxy-3-methyl-2-ketobutyrate (HMKB). In the reductase reaction, this 2-ketoacid undergoes a metal-dependent reduction by NADPH to yield (R)-2,3-dihydroxy-isovalerate. The chain is Ketol-acid reductoisomerase (NADP(+)) from Erwinia tasmaniensis (strain DSM 17950 / CFBP 7177 / CIP 109463 / NCPPB 4357 / Et1/99).